The chain runs to 238 residues: Synapse differentiation-inducing gene protein 1-like (238 aa).

Disordered regions lie at residues 1-24, 78-111, and 126-155; these read MESL…GPYP, KVKE…PGQA, and EEFQ…NFLT. At 1–162 the chain is on the extracellular side; the sequence is MESLSELQNP…FLTLPPRDHL (162 aa). Residues 133–151 are compositionally biased toward acidic residues; sequence GDPEEEESDATSTESESED. A helical transmembrane segment spans residues 163–183; sequence GLTIFSMLCCFWPLGIAAFYF. Residues 184–205 are Cytoplasmic-facing; sequence SQGTSKAISKGDFRLANTTSRR. The helical transmembrane segment at 206-226 threads the bilayer; it reads ALFLATLSIAVGAGLYVAVVV. The Extracellular portion of the chain corresponds to 227–238; it reads ALAAYMSQNGHS.

This sequence belongs to the CD225/Dispanin family.

The protein localises to the membrane. It localises to the golgi apparatus. The protein resides in the cis-Golgi network. This chain is Synapse differentiation-inducing gene protein 1-like (SYNDIG1L), found in Bos taurus (Bovine).